We begin with the raw amino-acid sequence, 427 residues long: WD repeat and SOCS box-containing protein 1 (427 aa).

WD repeat units lie at residues 129–170 (SRSI…LLLN), 173–213 (DHTD…NMVK), 217–256 (GHPNRVYSSAFSPDSSVLCSVGASKAVLLWNMDKYTLIRK), 259–298 (GHHNDVVSCEFSPDGALLATASYDTRVIVWDHQRGSILLE), and 314–353 (ANDRWVRSVSFCADGRHIASVSDDRLVRFWSIEERAPQAV). The 49-residue stretch at 379–427 (SVHFWECPRSIASLQHLCRMALRRVKTTQQVEALPVPMPLRDFLTYRVV) folds into the SOCS box domain.

As to quaternary structure, component of a probable ECS E3 ubiquitin-protein ligase complex that contains the Elongin BC complex.

It functions in the pathway protein modification; protein ubiquitination. In terms of biological role, probable substrate-recognition component of a SCF-like ECS (Elongin-Cullin-SOCS-box protein) E3 ubiquitin-protein ligase complex which mediates the ubiquitination and subsequent proteasomal degradation of target proteins. The protein is WD repeat and SOCS box-containing protein 1 (wsb1) of Takifugu rubripes (Japanese pufferfish).